The chain runs to 125 residues: Morphine 6-dehydrogenase (125 aa).

NADP(+) contacts are provided by residues 9 to 18 (GHSIPVLGFI) and 74 to 111 (SALGSSRDPWKQSPALIALRYQLQRGVVVLAKSFIERE).

It belongs to the aldo/keto reductase family. Monomer. In terms of processing, the N-terminus is blocked.

The protein localises to the cytoplasm. It carries out the reaction morphine + NAD(+) = morphinone + NADH + H(+). It catalyses the reaction morphine + NADP(+) = morphinone + NADPH + H(+). With respect to regulation, strongly inhibited by sulfhydryl reagents and quercetin, but not by pyrazole, barbital and indomethacine. Its function is as follows. Catalyzes the dehydrogenation of morphine to morphinone. Uses both NAD and NADP, but the activity is much greater with NAD than with NADP. This chain is Morphine 6-dehydrogenase, found in Oryctolagus cuniculus (Rabbit).